We begin with the raw amino-acid sequence, 331 residues long: Transmembrane protein 59-like (331 aa).

A signal peptide spans 1 to 21; that stretch reads MAAVALPLLLLLASPATPTPA. The tract at residues 15-62 is disordered; that stretch reads PATPTPARDPFSPQLGDTQRCQQRCRQRHPGLPPAQPEPEGPSESPNN. Residues 45–54 show a composition bias toward pro residues; sequence GLPPAQPEPE. Residue asparagine 90 is glycosylated (N-linked (GlcNAc...) asparagine). Residues 258–278 form a helical membrane-spanning segment; sequence VLFCCLFLSVLIILWLSCCTL. Residues 329-331 carry the Microbody targeting signal motif; the sequence is TTL.

It belongs to the TMEM59 family.

It is found in the golgi apparatus membrane. In terms of biological role, modulates the O-glycosylation and complex N-glycosylation steps occurring during the Golgi maturation of APP. Inhibits APP transport to the cell surface and further shedding. This chain is Transmembrane protein 59-like (Tmem59l), found in Rattus norvegicus (Rat).